Reading from the N-terminus, the 676-residue chain is Methionine--tRNA ligase (676 aa).

The 'HIGH' region motif lies at 15-25 (PYANGSIHLGH). Zn(2+)-binding residues include Cys-146, Cys-149, Cys-159, and Cys-162. The 'KMSKS' region motif lies at 332–336 (KMSKS). Residue Lys-335 participates in ATP binding. A tRNA-binding domain is found at 574-676 (DFAKVDMRIA…SGAQPGQQVK (103 aa)).

This sequence belongs to the class-I aminoacyl-tRNA synthetase family. MetG type 1 subfamily. As to quaternary structure, homodimer. Zn(2+) serves as cofactor.

The protein localises to the cytoplasm. It carries out the reaction tRNA(Met) + L-methionine + ATP = L-methionyl-tRNA(Met) + AMP + diphosphate. Functionally, is required not only for elongation of protein synthesis but also for the initiation of all mRNA translation through initiator tRNA(fMet) aminoacylation. This is Methionine--tRNA ligase from Erwinia tasmaniensis (strain DSM 17950 / CFBP 7177 / CIP 109463 / NCPPB 4357 / Et1/99).